Reading from the N-terminus, the 314-residue chain is Putative SET domain-containing protein L222 (314 aa).

Residues 23–172 (EYIQVIYQNP…ANTEITISYG (150 aa)) form the SET domain.

It belongs to the class V-like SAM-binding methyltransferase superfamily.

This chain is Putative SET domain-containing protein L222, found in Acanthamoeba polyphaga mimivirus (APMV).